The chain runs to 123 residues: Small ribosomal subunit protein uS12c (123 aa).

This sequence belongs to the universal ribosomal protein uS12 family. Part of the 30S ribosomal subunit.

It is found in the plastid. The protein localises to the chloroplast. Functionally, with S4 and S5 plays an important role in translational accuracy. Located at the interface of the 30S and 50S subunits. The sequence is that of Small ribosomal subunit protein uS12c (rps12) from Huperzia lucidula (Shining clubmoss).